Reading from the N-terminus, the 206-residue chain is Ribosomal RNA large subunit methyltransferase E (206 aa).

Positions 61, 63, 81, 97, and 122 each coordinate S-adenosyl-L-methionine. K162 serves as the catalytic Proton acceptor.

It belongs to the class I-like SAM-binding methyltransferase superfamily. RNA methyltransferase RlmE family.

Its subcellular location is the cytoplasm. The catalysed reaction is uridine(2552) in 23S rRNA + S-adenosyl-L-methionine = 2'-O-methyluridine(2552) in 23S rRNA + S-adenosyl-L-homocysteine + H(+). Its function is as follows. Specifically methylates the uridine in position 2552 of 23S rRNA at the 2'-O position of the ribose in the fully assembled 50S ribosomal subunit. The protein is Ribosomal RNA large subunit methyltransferase E of Neisseria gonorrhoeae (strain ATCC 700825 / FA 1090).